Reading from the N-terminus, the 523-residue chain is Light-independent protochlorophyllide reductase subunit B (523 aa).

Residue D36 participates in [4Fe-4S] cluster binding. D290 (proton donor) is an active-site residue. 425–426 (GL) is a substrate binding site.

It belongs to the ChlB/BchB/BchZ family. In terms of assembly, protochlorophyllide reductase is composed of three subunits; ChlL, ChlN and ChlB. Forms a heterotetramer of two ChlB and two ChlN subunits. [4Fe-4S] cluster serves as cofactor.

It carries out the reaction chlorophyllide a + oxidized 2[4Fe-4S]-[ferredoxin] + 2 ADP + 2 phosphate = protochlorophyllide a + reduced 2[4Fe-4S]-[ferredoxin] + 2 ATP + 2 H2O. It participates in porphyrin-containing compound metabolism; chlorophyll biosynthesis (light-independent). Component of the dark-operative protochlorophyllide reductase (DPOR) that uses Mg-ATP and reduced ferredoxin to reduce ring D of protochlorophyllide (Pchlide) to form chlorophyllide a (Chlide). This reaction is light-independent. The NB-protein (ChlN-ChlB) is the catalytic component of the complex. In Prochlorococcus marinus (strain MIT 9301), this protein is Light-independent protochlorophyllide reductase subunit B.